Consider the following 417-residue polypeptide: Fructose-1,6-bisphosphatase 1, chloroplastic (417 aa).

The N-terminal 59 residues, 1-59 (MAATAATTTSSHLLLSSSRHVASSSQPSILSPRSLFSNNGKRAPTGVRNHQYASGVRCM), are a transit peptide targeting the chloroplast. The segment covering 24-35 (SSQPSILSPRSL) has biased composition (low complexity). Residues 24 to 48 (SSQPSILSPRSLFSNNGKRAPTGVR) form a disordered region. At Ala60 the chain carries N-acetylalanine. Mg(2+) contacts are provided by Glu138, Glu167, Asp188, Leu190, and Asp191. 191 to 194 (DGSS) contributes to the substrate binding site. Residues Cys233 and Cys238 are joined by a disulfide bond. Asn297, Tyr329, Tyr347, Tyr349, and Lys359 together coordinate substrate. A Mg(2+)-binding site is contributed by Glu365.

The protein belongs to the FBPase class 1 family. As to quaternary structure, homotetramer. It depends on Mg(2+) as a cofactor.

Its subcellular location is the plastid. The protein resides in the chloroplast stroma. It catalyses the reaction beta-D-fructose 1,6-bisphosphate + H2O = beta-D-fructose 6-phosphate + phosphate. It functions in the pathway carbohydrate biosynthesis; Calvin cycle. Catalyzes the irreversible reaction from fructose-1,6-bisphosphate to fructose-6-phosphate and inorganic phosphate, to regenerate the primary CO(2) acceptor molecule, ribulose-1,5-bisphosphate. Involved in the regulation of photosynthetic electron flow and sucrose synthesis. Its activity is critical for normal plant development and important for the regulation of a wide range of metabolic processes. In Arabidopsis thaliana (Mouse-ear cress), this protein is Fructose-1,6-bisphosphatase 1, chloroplastic.